The primary structure comprises 399 residues: Probable aspartate/prephenate aminotransferase (399 aa).

Residues glycine 39, tryptophan 125, and asparagine 175 each coordinate L-aspartate. Position 239 is an N6-(pyridoxal phosphate)lysine (lysine 239). An L-aspartate-binding site is contributed by arginine 375.

The protein belongs to the class-I pyridoxal-phosphate-dependent aminotransferase family. Homodimer. Pyridoxal 5'-phosphate is required as a cofactor.

Its subcellular location is the cytoplasm. It carries out the reaction L-aspartate + 2-oxoglutarate = oxaloacetate + L-glutamate. The enzyme catalyses L-arogenate + 2-oxoglutarate = prephenate + L-glutamate. Functionally, catalyzes the reversible conversion of aspartate and 2-oxoglutarate to glutamate and oxaloacetate. Can also transaminate prephenate in the presence of glutamate. The polypeptide is Probable aspartate/prephenate aminotransferase (aatA) (Rickettsia prowazekii (strain Madrid E)).